The sequence spans 660 residues: Methionine--tRNA ligase (660 aa).

The short motif at 11–21 is the 'HIGH' region element; it reads PYANGPCHLGH. 4 residues coordinate Zn(2+): C143, C146, C155, and C158. Positions 325–329 match the 'KMSKS' region motif; the sequence is KMSTS. T328 lines the ATP pocket. The 98-residue stretch at 563 to 660 folds into the tRNA-binding domain; that stretch reads DFDKVVIKIG…DECEVGERIQ (98 aa).

It belongs to the class-I aminoacyl-tRNA synthetase family. MetG type 1 subfamily. In terms of assembly, homodimer. Zn(2+) is required as a cofactor.

It is found in the cytoplasm. The catalysed reaction is tRNA(Met) + L-methionine + ATP = L-methionyl-tRNA(Met) + AMP + diphosphate. Its function is as follows. Is required not only for elongation of protein synthesis but also for the initiation of all mRNA translation through initiator tRNA(fMet) aminoacylation. The sequence is that of Methionine--tRNA ligase from Methanobrevibacter smithii (strain ATCC 35061 / DSM 861 / OCM 144 / PS).